The chain runs to 24 residues: Coenzyme PQQ synthesis protein A (24 aa).

A cross-link (pyrroloquinoline quinone (Glu-Tyr)) is located at residues 16-20 (EVTMY).

The protein belongs to the PqqA family.

The protein operates within cofactor biosynthesis; pyrroloquinoline quinone biosynthesis. Required for coenzyme pyrroloquinoline quinone (PQQ) biosynthesis. PQQ is probably formed by cross-linking a specific glutamate to a specific tyrosine residue and excising these residues from the peptide. The chain is Coenzyme PQQ synthesis protein A from Pseudomonas syringae pv. syringae (strain B728a).